We begin with the raw amino-acid sequence, 190 residues long: Small ribosomal subunit protein eS7B (190 aa).

At Ser-2 the chain carries N-acetylserine. Phosphoserine is present on residues Ser-10 and Ser-31. Residues Lys-83 and Lys-84 each participate in a glycyl lysine isopeptide (Lys-Gly) (interchain with G-Cter in ubiquitin) cross-link.

It belongs to the eukaryotic ribosomal protein eS7 family. Component of the small ribosomal subunit (SSU). Mature yeast ribosomes consist of a small (40S) and a large (60S) subunit. The 40S small subunit contains 1 molecule of ribosomal RNA (18S rRNA) and 33 different proteins (encoded by 57 genes). The large 60S subunit contains 3 rRNA molecules (25S, 5.8S and 5S rRNA) and 46 different proteins (encoded by 81 genes). Interacts with snoRNA U3. uS11 interacts with MPP10. Component of the ribosomal small subunit (SSU) processome composed of at least 40 protein subunits and snoRNA U3. In terms of processing, N-terminally acetylated by acetyltransferase NatA. Post-translationally, ubiquitinated at Lys-83 and Lys-84 in response to stalled ribosomes, leading to activation of the No-Go Decay (NGD) pathway: first monoubiquitinated by MOT2/NOT4, followed by formation by HEL2 of 'Lys-63'-linked polyubiquitin chains on monoubiquitin.

The protein resides in the cytoplasm. Its subcellular location is the nucleus. It localises to the nucleolus. In terms of biological role, component of the ribosome, a large ribonucleoprotein complex responsible for the synthesis of proteins in the cell. The small ribosomal subunit (SSU) binds messenger RNAs (mRNAs) and translates the encoded message by selecting cognate aminoacyl-transfer RNA (tRNA) molecules. The large subunit (LSU) contains the ribosomal catalytic site termed the peptidyl transferase center (PTC), which catalyzes the formation of peptide bonds, thereby polymerizing the amino acids delivered by tRNAs into a polypeptide chain. The nascent polypeptides leave the ribosome through a tunnel in the LSU and interact with protein factors that function in enzymatic processing, targeting, and the membrane insertion of nascent chains at the exit of the ribosomal tunnel. eS7 is involved in nucleolar processing of pre-18S ribosomal RNA and ribosome assembly. This is Small ribosomal subunit protein eS7B from Saccharomyces cerevisiae (strain ATCC 204508 / S288c) (Baker's yeast).